A 253-amino-acid chain; its full sequence is 3-deoxy-manno-octulosonate cytidylyltransferase (253 aa).

It belongs to the KdsB family.

It is found in the cytoplasm. It carries out the reaction 3-deoxy-alpha-D-manno-oct-2-ulosonate + CTP = CMP-3-deoxy-beta-D-manno-octulosonate + diphosphate. It functions in the pathway nucleotide-sugar biosynthesis; CMP-3-deoxy-D-manno-octulosonate biosynthesis; CMP-3-deoxy-D-manno-octulosonate from 3-deoxy-D-manno-octulosonate and CTP: step 1/1. The protein operates within bacterial outer membrane biogenesis; lipopolysaccharide biosynthesis. Functionally, activates KDO (a required 8-carbon sugar) for incorporation into bacterial lipopolysaccharide in Gram-negative bacteria. The polypeptide is 3-deoxy-manno-octulosonate cytidylyltransferase (Pseudoalteromonas translucida (strain TAC 125)).